A 141-amino-acid chain; its full sequence is D-aminoacyl-tRNA deacylase (141 aa).

The short motif at 133–134 (GP) is the Gly-cisPro motif, important for rejection of L-amino acids element.

This sequence belongs to the DTD family. In terms of assembly, homodimer.

The protein resides in the cytoplasm. It carries out the reaction glycyl-tRNA(Ala) + H2O = tRNA(Ala) + glycine + H(+). The catalysed reaction is a D-aminoacyl-tRNA + H2O = a tRNA + a D-alpha-amino acid + H(+). In terms of biological role, an aminoacyl-tRNA editing enzyme that deacylates mischarged D-aminoacyl-tRNAs. Also deacylates mischarged glycyl-tRNA(Ala), protecting cells against glycine mischarging by AlaRS. Acts via tRNA-based rather than protein-based catalysis; rejects L-amino acids rather than detecting D-amino acids in the active site. By recycling D-aminoacyl-tRNA to D-amino acids and free tRNA molecules, this enzyme counteracts the toxicity associated with the formation of D-aminoacyl-tRNA entities in vivo and helps enforce protein L-homochirality. The sequence is that of D-aminoacyl-tRNA deacylase from Streptomyces coelicolor (strain ATCC BAA-471 / A3(2) / M145).